The primary structure comprises 424 residues: Omega-6 fatty acid desaturase, chloroplastic (424 aa).

The transit peptide at 1–63 directs the protein to the chloroplast; that stretch reads MACTLADSLL…TRNKVTVIHA (63 aa). N-acetylvaline is present on Val64. The Histidine box-1 motif lies at 165-169; that stretch reads HDCAH. The Histidine box-2 signature appears at 201-205; the sequence is HDRHH. The short motif at 361-365 is the Histidine box-3 element; sequence HIPHH.

This sequence belongs to the fatty acid desaturase type 1 family.

Its subcellular location is the plastid. The protein localises to the chloroplast membrane. It carries out the reaction a (9Z)-octadecenoyl-containing glycerolipid + 2 reduced [2Fe-2S]-[ferredoxin] + O2 + 2 H(+) = a (9Z,12Z)-octadecadienoyl-containing glycerolipid + 2 oxidized [2Fe-2S]-[ferredoxin] + 2 H2O. The protein operates within lipid metabolism; polyunsaturated fatty acid biosynthesis. In terms of biological role, chloroplast omega-6 fatty acid desaturase introduces the second double bond in the biosynthesis of 16:3 and 18:3 fatty acids, important constituents of plant membranes. It is thought to use ferredoxin as an electron donor and to act on fatty acids esterified to galactolipids, sulfolipids and phosphatidylglycerol. This chain is Omega-6 fatty acid desaturase, chloroplastic, found in Glycine max (Soybean).